The following is a 102-amino-acid chain: NADH-quinone oxidoreductase subunit K (102 aa).

3 helical membrane passes run 5 to 25, 31 to 51, and 65 to 85; these read LSHYLTVSAILFTLGVFGIFL, IVILMSVELILLAVNINMVAF, and LFILTVAAAEAAIGLAILVVF.

The protein belongs to the complex I subunit 4L family. NDH-1 is composed of 14 different subunits. Subunits NuoA, H, J, K, L, M, N constitute the membrane sector of the complex.

The protein resides in the cell inner membrane. It carries out the reaction a quinone + NADH + 5 H(+)(in) = a quinol + NAD(+) + 4 H(+)(out). Its function is as follows. NDH-1 shuttles electrons from NADH, via FMN and iron-sulfur (Fe-S) centers, to quinones in the respiratory chain. The immediate electron acceptor for the enzyme in this species is believed to be ubiquinone. Couples the redox reaction to proton translocation (for every two electrons transferred, four hydrogen ions are translocated across the cytoplasmic membrane), and thus conserves the redox energy in a proton gradient. The sequence is that of NADH-quinone oxidoreductase subunit K from Rhizobium leguminosarum bv. trifolii (strain WSM2304).